A 255-amino-acid chain; its full sequence is MKIGVFDSGVGGFSVLKSLLKAQLFDEIIYYGDSARVPYGTKDPTTIKQFGLEALDFFKPHQIKLLIVACNTASALALEEMQKHSKIPIVGVIEPSILAIKQQVKDKNAPILVLGTKATIQSNAYDNALKQQGYLNVSHLATSLFVPLIEENILEGELLETCMRYYFTPLKILPEVIILGCTHFPLIAQKIEGYFMGHFALPTPPLLIHSGDAIVGYLQQKYALKKNAHAFPKVEFHASGDVVWLEKQAKEWLKL.

Substrate contacts are provided by residues 7-8 and 39-40; these read DS and YG. Residue C70 is the Proton donor/acceptor of the active site. 71–72 is a binding site for substrate; sequence NT. Residue C181 is the Proton donor/acceptor of the active site. Substrate is bound at residue 182 to 183; the sequence is TH.

This sequence belongs to the aspartate/glutamate racemases family.

The enzyme catalyses L-glutamate = D-glutamate. Its pathway is cell wall biogenesis; peptidoglycan biosynthesis. Provides the (R)-glutamate required for cell wall biosynthesis. This Helicobacter pylori (strain P12) protein is Glutamate racemase.